A 368-amino-acid polypeptide reads, in one-letter code: Uroporphyrinogen decarboxylase (368 aa).

Substrate is bound by residues 41 to 45 (RQAGR), aspartate 91, tyrosine 168, serine 223, and histidine 345.

The protein belongs to the uroporphyrinogen decarboxylase family. In terms of assembly, homodimer.

It localises to the cytoplasm. It carries out the reaction uroporphyrinogen III + 4 H(+) = coproporphyrinogen III + 4 CO2. The protein operates within porphyrin-containing compound metabolism; protoporphyrin-IX biosynthesis; coproporphyrinogen-III from 5-aminolevulinate: step 4/4. Catalyzes the decarboxylation of four acetate groups of uroporphyrinogen-III to yield coproporphyrinogen-III. The sequence is that of Uroporphyrinogen decarboxylase from Psychrobacter sp. (strain PRwf-1).